The primary structure comprises 430 residues: Replication protein A 32 kDa subunit C (430 aa).

Residues 14–46 (MPSQRSGAPAPEYSAAGTGAAAAPSPSKPRDPR) are disordered. Positions 23 to 38 (APEYSAAGTGAAAAPS) are enriched in low complexity. The OB DNA-binding region spans 86–160 (VRVLGRVVSV…QGLARSIRPI (75 aa)).

This sequence belongs to the replication factor A protein 2 family. In terms of assembly, heterotrimer of RPA1, RPA2 and RPA3 (canonical replication protein A complex). Interacts with RPA1C and RPA3. Post-translationally, phosphorylated in a cell-cycle-dependent manner (from the S phase until mitosis). In response to DNA damage, recruited to DNA-repair nuclear foci, as a hypophosphorylated form.

It localises to the nucleus. Its function is as follows. Component of the replication protein A complex (RPA) required for DNA recombination, repair and replication. The activity of RPA is mediated by single-stranded DNA binding and protein interactions. This is Replication protein A 32 kDa subunit C (RPA2C) from Oryza sativa subsp. japonica (Rice).